Here is a 302-residue protein sequence, read N- to C-terminus: Arginase (302 aa).

Mn(2+) contacts are provided by His-103, Asp-126, His-128, and Asp-130. Residues 128–132, 139–141, and Asp-180 each bind substrate; these read HGDLN and SGN. Mn(2+) contacts are provided by Asp-229 and Asp-231. Residues Thr-243 and Glu-274 each coordinate substrate.

It belongs to the arginase family. Requires Mn(2+) as cofactor.

The enzyme catalyses L-arginine + H2O = urea + L-ornithine. It participates in nitrogen metabolism; urea cycle; L-ornithine and urea from L-arginine: step 1/1. This chain is Arginase (arg), found in Staphylococcus aureus (strain MRSA252).